A 205-amino-acid chain; its full sequence is Probable inactive peroxygenase-like protein (205 aa).

The Proline-knot motif lies at 79 to 88 (PVQLFGYILP). A Phosphoserine modification is found at serine 183.

It belongs to the caleosin family.

It localises to the lipid droplet. The chain is Probable inactive peroxygenase-like protein from Arabidopsis thaliana (Mouse-ear cress).